The sequence spans 175 residues: Large ribosomal subunit protein uL10 (175 aa).

It belongs to the universal ribosomal protein uL10 family. In terms of assembly, part of the ribosomal stalk of the 50S ribosomal subunit. The N-terminus interacts with L11 and the large rRNA to form the base of the stalk. The C-terminus forms an elongated spine to which L12 dimers bind in a sequential fashion forming a multimeric L10(L12)X complex.

Functionally, forms part of the ribosomal stalk, playing a central role in the interaction of the ribosome with GTP-bound translation factors. This is Large ribosomal subunit protein uL10 from Prochlorococcus marinus (strain AS9601).